Consider the following 269-residue polypeptide: 4-hydroxy-tetrahydrodipicolinate reductase (269 aa).

NAD(+)-binding positions include Gly9–Met14 and Glu35. Arg36 is an NADP(+) binding site. NAD(+) is bound by residues Gly98–Thr100 and Ala122–Tyr125. His155 (proton donor/acceptor) is an active-site residue. Residue His156 coordinates (S)-2,3,4,5-tetrahydrodipicolinate. Lys159 acts as the Proton donor in catalysis. Gly165–Thr166 is a (S)-2,3,4,5-tetrahydrodipicolinate binding site.

It belongs to the DapB family.

The protein localises to the cytoplasm. It carries out the reaction (S)-2,3,4,5-tetrahydrodipicolinate + NAD(+) + H2O = (2S,4S)-4-hydroxy-2,3,4,5-tetrahydrodipicolinate + NADH + H(+). The catalysed reaction is (S)-2,3,4,5-tetrahydrodipicolinate + NADP(+) + H2O = (2S,4S)-4-hydroxy-2,3,4,5-tetrahydrodipicolinate + NADPH + H(+). The protein operates within amino-acid biosynthesis; L-lysine biosynthesis via DAP pathway; (S)-tetrahydrodipicolinate from L-aspartate: step 4/4. Catalyzes the conversion of 4-hydroxy-tetrahydrodipicolinate (HTPA) to tetrahydrodipicolinate. This Actinobacillus pleuropneumoniae serotype 3 (strain JL03) protein is 4-hydroxy-tetrahydrodipicolinate reductase.